Consider the following 810-residue polypeptide: Phenylalanine--tRNA ligase beta subunit (810 aa).

Positions 39–154 (APPTEKIVVG…EGTPVGQDIR (116 aa)) constitute a tRNA-binding domain. One can recognise a B5 domain in the interval 405–480 (PQRAPVSMRA…RIYGFEKIPA (76 aa)). Positions 458, 464, 467, and 468 each coordinate Mg(2+). The FDX-ACB domain maps to 707–809 (SKFPPVRRDI…MARVYGARLR (103 aa)).

It belongs to the phenylalanyl-tRNA synthetase beta subunit family. Type 1 subfamily. As to quaternary structure, tetramer of two alpha and two beta subunits. Mg(2+) is required as a cofactor.

The protein localises to the cytoplasm. The catalysed reaction is tRNA(Phe) + L-phenylalanine + ATP = L-phenylalanyl-tRNA(Phe) + AMP + diphosphate + H(+). This is Phenylalanine--tRNA ligase beta subunit from Burkholderia mallei (strain ATCC 23344).